A 251-amino-acid chain; its full sequence is Phosphate import ATP-binding protein PstB 2 (251 aa).

One can recognise an ABC transporter domain in the interval F6–V246. Position 38–45 (G38–S45) interacts with ATP.

The protein belongs to the ABC transporter superfamily. Phosphate importer (TC 3.A.1.7) family. In terms of assembly, the complex is composed of two ATP-binding proteins (PstB), two transmembrane proteins (PstC and PstA) and a solute-binding protein (PstS).

Its subcellular location is the cell inner membrane. The catalysed reaction is phosphate(out) + ATP + H2O = ADP + 2 phosphate(in) + H(+). Its function is as follows. Part of the ABC transporter complex PstSACB involved in phosphate import. Responsible for energy coupling to the transport system. The polypeptide is Phosphate import ATP-binding protein PstB 2 (Vibrio cholerae serotype O1 (strain ATCC 39315 / El Tor Inaba N16961)).